The following is a 615-amino-acid chain: 9-cis-epoxycarotenoid dioxygenase NCED1, chloroplastic (615 aa).

Residues 1 to 41 (MPSPASNTWINTTLPSSCSSPFKDLASTSSSPTTLLPFKKR) constitute a chloroplast transit peptide. 2 disordered regions span residues 20–45 (SPFK…SSSN) and 62–101 (YQPT…KQPF). Composition is skewed to low complexity over residues 27–37 (STSSSPTTLLP) and 64–86 (PTST…TTTT). Residues histidine 316, histidine 365, and histidine 430 each coordinate Fe cation. Residues 571 to 592 (KEWKSELQIVNAQNLKLEASIK) are a coiled coil. Histidine 602 is a binding site for Fe cation.

Belongs to the carotenoid oxygenase family. Fe(2+) is required as a cofactor.

It localises to the plastid. It is found in the chloroplast thylakoid membrane. It carries out the reaction a 9-cis-epoxycarotenoid + O2 = a 12'-apo-carotenal + 2-cis,4-trans-xanthoxin. It catalyses the reaction 9-cis-violaxanthin + O2 = (3S,5R,6S)-5,6-epoxy-3-hydroxy-5,6-dihydro-12'-apo-beta-caroten-12'-al + 2-cis,4-trans-xanthoxin. The catalysed reaction is 9'-cis-neoxanthin + O2 = (3S,5R,6R)-3,5-dihydroxy-6,7-didehydro-5,6-dihydro-12'-apo-beta-caroten-12'-al + 2-cis,4-trans-xanthoxin. Has a 11,12(11',12') 9-cis epoxycarotenoid cleavage activity. Catalyzes the first step of abscisic-acid biosynthesis from carotenoids, in response to water stress. Active on 9-cis-violaxanthin and 9'-cis-neoxanthin, but not on the all-trans isomers of violaxanthin and neoxanthin. The protein is 9-cis-epoxycarotenoid dioxygenase NCED1, chloroplastic (NCED1) of Phaseolus vulgaris (Kidney bean).